The following is a 487-amino-acid chain: MASFVKFANTTFLDARFPLFKNVSFELARKQNWAIIGNTGSGRTTFLRCIQGSFTPSPSTSFSYPFLKGKSDSPWQAIQLLDFKSSGQQRAAYYSERYHSFRDKEHDTTLEKWLLGAYRGNEKFASQHVQEAASMTQLSHLLPSSLINLSNGQSRRAMLASKLVQRPQLLLLDEPYAGLDVTSRSVLSSLLGEMSNHCSPKIVLSLRPQDKIPDFITHVLELKNKKITYQGPKEQYIPMTSHSTNIPVKPQMKKSKPITIGKPLISMEHLNCVYWGRKVLSDINWTIREGERWALTGSNGSGKTTLLAYVVGDHPKLFASNIKFFGKSIGPGTGISIFDIQENIGHCSPEIHNHFPKQHTCFEALLSAWSTTFTIPKLTETRLAAISSILEEFELKDIKDKPLSSISVGMQRFILFCRAIVKQPRLVVLDEPFQGVDTKYVHMAHNYLNEKLSPSQAMVIISHYEDELPACVNRRAHIDNGKLVIHA.

ABC transporter domains follow at residues 5–249 (VKFA…IPVK) and 265–487 (ISME…VIHA). 297 to 304 (GSNGSGKT) is an ATP binding site.

The protein belongs to the ABC transporter superfamily.

The protein localises to the mitochondrion. This is an uncharacterized protein from Schizosaccharomyces pombe (strain 972 / ATCC 24843) (Fission yeast).